Reading from the N-terminus, the 635-residue chain is Phosphomethylpyrimidine synthase (635 aa).

Polar residues predominate over residues 1–14 (MNATVSSAVQSSLP). Residues 1-41 (MNATVSSAVQSSLPFSGKTAQVDEGTVKPLPRSQKTYLSGS) form a disordered region. Substrate contacts are provided by residues Asn240, Met269, Tyr298, His334, 354–356 (SRG), 395–398 (DGLR), and Glu434. His438 is a binding site for Zn(2+). Position 461 (Tyr461) interacts with substrate. Zn(2+) is bound at residue His502. Residues Cys582, Cys585, and Cys590 each contribute to the [4Fe-4S] cluster site.

It belongs to the ThiC family. Homodimer. Requires [4Fe-4S] cluster as cofactor.

It carries out the reaction 5-amino-1-(5-phospho-beta-D-ribosyl)imidazole + S-adenosyl-L-methionine = 4-amino-2-methyl-5-(phosphooxymethyl)pyrimidine + CO + 5'-deoxyadenosine + formate + L-methionine + 3 H(+). It functions in the pathway cofactor biosynthesis; thiamine diphosphate biosynthesis. Its function is as follows. Catalyzes the synthesis of the hydroxymethylpyrimidine phosphate (HMP-P) moiety of thiamine from aminoimidazole ribotide (AIR) in a radical S-adenosyl-L-methionine (SAM)-dependent reaction. In Nitrosospira multiformis (strain ATCC 25196 / NCIMB 11849 / C 71), this protein is Phosphomethylpyrimidine synthase.